We begin with the raw amino-acid sequence, 210 residues long: uncharacterized protein (210 aa).

This is an uncharacterized protein from Nostoc sp. (strain PCC 7120 / SAG 25.82 / UTEX 2576).